Here is a 287-residue protein sequence, read N- to C-terminus: Putative sugar uptake protein LJ_0170 (287 aa).

Helical transmembrane passes span 4–23 (VYLF…IASV), 28–50 (VYNQ…MAIM), 56–78 (WSLF…GQYI), 91–108 (ISTG…VLAF), 118–137 (LYGF…TSFT), 150–169 (VSTI…SSSI), 179–198 (SIFF…YTLV), 211–230 (VQSG…YILS), 240–259 (FVIS…IFLH), and 266–285 (GLIF…MLTT).

This sequence belongs to the GRP transporter (TC 2.A.7.5) family.

The protein localises to the cell membrane. This is Putative sugar uptake protein LJ_0170 from Lactobacillus johnsonii (strain CNCM I-12250 / La1 / NCC 533).